A 35-amino-acid polypeptide reads, in one-letter code: Small toxic polypeptide LdrA (35 aa).

Residues methionine 8–valine 28 traverse the membrane as a helical segment.

This sequence belongs to the Ldr toxic peptide family.

The protein resides in the cell inner membrane. Functionally, toxic component of a type I toxin-antitoxin (TA) system. Inhibits ATP synthesis possibly due to its insertion in the cell inner membrane, ATP levels drop over 50% 2 minutes after induction. Overexpression is toxic leading to cell death, it inhibits cell growth within 30 minutes; C-terminally tagged versions of the protein are toxic while N-terminally tagged versions are not. In Escherichia coli (strain K12), this protein is Small toxic polypeptide LdrA (ldrA).